A 461-amino-acid chain; its full sequence is Ribosomal protein uS12 methylthiotransferase RimO (461 aa).

The MTTase N-terminal domain occupies 9 to 124; that stretch reads PRIGMVSLGC…VMDAVHLNLP (116 aa). Residues Cys18, Cys54, Cys83, Cys159, Cys163, and Cys166 each contribute to the [4Fe-4S] cluster site. The region spanning 145–387 is the Radical SAM core domain; sequence LTPRHYAYLK…AVAEAVSSQK (243 aa). Residues 389 to 461 enclose the TRAM domain; the sequence is QQRVGATMQV…QGHDLIAVPV (73 aa).

This sequence belongs to the methylthiotransferase family. RimO subfamily. It depends on [4Fe-4S] cluster as a cofactor.

The protein localises to the cytoplasm. It carries out the reaction L-aspartate(89)-[ribosomal protein uS12]-hydrogen + (sulfur carrier)-SH + AH2 + 2 S-adenosyl-L-methionine = 3-methylsulfanyl-L-aspartate(89)-[ribosomal protein uS12]-hydrogen + (sulfur carrier)-H + 5'-deoxyadenosine + L-methionine + A + S-adenosyl-L-homocysteine + 2 H(+). Catalyzes the methylthiolation of an aspartic acid residue of ribosomal protein uS12. This Polaromonas naphthalenivorans (strain CJ2) protein is Ribosomal protein uS12 methylthiotransferase RimO.